Consider the following 289-residue polypeptide: MRVLVNKHVFMQPQPGHYAHTRMSMLLLKPKTKDLLSHRLDDVFRSASREADALAAARYREPERGAPTGFNLAFNTDKNFWEYITNDDPQRGERFARAMHAVNINSLDVIPRLYPFDSLVVDGGLIVDVGGGQGQVAKRILEYFPSSGLRCIVQDRYVVNASSPGPAVVEMQQHDFFEAQPVKGAAAYFFRHIFHDWPDKACAAILKQTARAMDKDRSRILICDQVLQDDVPAEASLLYDIDMMSLFGGKERSLAEWKYLIASAEESLHIVNVIFSTESEAAILDVRIK.

Aspartate 155 provides a ligand contact to S-adenosyl-L-methionine. Histidine 195 (proton acceptor) is an active-site residue.

Belongs to the class I-like SAM-binding methyltransferase superfamily. Cation-independent O-methyltransferase family.

Its pathway is secondary metabolite biosynthesis. It participates in alkaloid biosynthesis. It functions in the pathway mycotoxin biosynthesis. O-methyltransferase; part of the gene cluster that mediates the biosynthesis of the aspoquinolone mycotoxins. The role of asqN within the aspoquinolone pathway has still to be determined. The first step of the pathway is catalyzed by the nonribosomal peptide synthetase asqK that condenses anthranilic acid and O-methyl-L-tyrosine to produce 4'-methoxycyclopeptin. 4'-methoxycyclopeptin is then converted to 4'-methoxydehydrocyclopeptin by the ketoglutarate-dependent dioxygenase asqJ. AsqJ also converts its first product 4'-methoxydehydrocyclopeptin to 4'-methoxycyclopenin. The following conversion of 4'-methoxycyclopenin into 4'-methoxyviridicatin is catalyzed by the cyclopenase asqI. 4'-methoxyviridicatin is the precursor of quinolone natural products, and is further converted to quinolinone B. The prenyltransferase asqH1 then catalyzes the canonical Friedel-Crafts alkylation of quinolinone B with dimethylallyl cation to yield dimethylallyl quinolone, which is subjected to FAD-dependent dehydrogenation by the FAD-linked oxidoreductase asqF to yield conjugated aryl diene. The delta(3') double bond then serves as the site of the second alkylation with DMAPP catalyzed by the prenyltransferase asqH2 to yield a carbenium ion intermediate, which can be attacked by H(2)O to yield a styrenyl quinolone containing a C3'-hydroxyprenyl chain. The FAD-dependent monooxygenase asqG performs epoxidation of the terminal C7'-C8' olefin. Finally, after dehydratation of the epoxide at C3 by asqC, the quinolone epoxide rearrangement protein asqO catalyzes an enzymatic 3-exo-tet cyclization to yield the cyclopropyl-THF ring system in aspoquinolone. The polypeptide is O-methyltransferase asqN (Emericella nidulans (strain FGSC A4 / ATCC 38163 / CBS 112.46 / NRRL 194 / M139) (Aspergillus nidulans)).